Reading from the N-terminus, the 489-residue chain is Aerolysin (489 aa).

A signal peptide spans 1–24; that stretch reads MMNRIITANLANLASSLMLAQVLG. 2 disulfides stabilise this stretch: Cys-44–Cys-100 and Cys-184–Cys-189. An interaction with host N-linked glycan region spans residues 70 to 86; sequence WQITGLADRWVIMGPGY. Positions 257 to 289 are part of the transmembrane beta-barrel after proteolytic activation of the toxin and insertion into the host membrane; that stretch reads YSLSEKVTTKNKFQWPLVGETELAIEIAASQSW. The interval 347 to 356 is interaction with glycans from host GPI-anchor; sequence RWGGNAWYTH. The propeptide occupies 445–489; the sequence is TRSAKAAQLRSASAEEVALTSVDLDSEALANEGFGNVSLTIVPVQ.

Belongs to the aerolysin family. In terms of assembly, homodimer in solution; homoheptamer in the host membrane. After binding to GPI-anchored proteins in target membranes and proteolytic removal of the C-terminal propeptide, the protein assembles into a heptameric pre-pore complex. A further conformation change leads to insertion into the host membrane. Proteolytic cleavage and subsequent release of the propeptide trigger a major conformation change, leading to the formation of a heptameric pre-pore that then inserts into the host membrane.

Its subcellular location is the secreted. The protein resides in the host cell membrane. Functionally, secreted, cytolytic toxin that forms pores in host membranes after proteolytic removal of a C-terminal propeptide, leading to destruction of the membrane permeability barrier and cell death. The pores are formed by transmembrane beta-strands and are approximately 3 nm in diameter. The polypeptide is Aerolysin (ash3) (Aeromonas salmonicida).